Here is a 130-residue protein sequence, read N- to C-terminus: MFDIGFTELTLIFIIGLVVLGPERLPTVARTLGHWIGRARSTLNHLKSELERETITQDMQERMEKQMRQMGLDEDSIREAKDSLLSPEQIARSRTPRDKPLSAALNNDESPSDKDSADKNNHDQDSRRHD.

Residues 1–21 (MFDIGFTELTLIFIIGLVVLG) form a helical membrane-spanning segment. Basic and acidic residues-rich tracts occupy residues 57–67 (QDMQERMEKQM) and 111–130 (PSDK…RRHD). Residues 57-130 (QDMQERMEKQ…NHDQDSRRHD (74 aa)) form a disordered region.

It belongs to the TatB family. The Tat system comprises two distinct complexes: a TatABC complex, containing multiple copies of TatA, TatB and TatC subunits, and a separate TatA complex, containing only TatA subunits. Substrates initially bind to the TatABC complex, which probably triggers association of the separate TatA complex to form the active translocon.

It localises to the cell inner membrane. Functionally, part of the twin-arginine translocation (Tat) system that transports large folded proteins containing a characteristic twin-arginine motif in their signal peptide across membranes. Together with TatC, TatB is part of a receptor directly interacting with Tat signal peptides. TatB may form an oligomeric binding site that transiently accommodates folded Tat precursor proteins before their translocation. The polypeptide is Sec-independent protein translocase protein TatB (Alcanivorax borkumensis (strain ATCC 700651 / DSM 11573 / NCIMB 13689 / SK2)).